Here is a 100-residue protein sequence, read N- to C-terminus: Vesicle-associated membrane protein 8 (100 aa).

Residues 1–74 lie on the Cytoplasmic side of the membrane; that stretch reads MEASGSAGND…ARKFWWKNVK (74 aa). 2 positions are modified to phosphoserine: Ser4 and Ser17. A v-SNARE coiled-coil homology domain is found at 11-71; that stretch reads RVRNLQSEVE…QKVARKFWWK (61 aa). A phosphothreonine mark is found at Thr27, Thr47, and Thr53. The residue at position 54 (Ser54) is a Phosphoserine. Residues 75–95 traverse the membrane as a helical; Anchor for type IV membrane protein segment; sequence MIVIICVIVLIILILIILFAT. At 96-100 the chain is on the vesicular side; the sequence is GTIPT.

This sequence belongs to the synaptobrevin family. As to quaternary structure, forms a SNARE complex composed of VAMP8, SNAP29 and STX17 involved in fusion of autophagosome with lysosome. Found in a number of SNARE complexes with NAPA, SNAP23, SNAP25, STX1A, STX4, STX7, STX8 and VTI1B. Interacts with PICALM. SNARE complex formation and binding by PICALM are mutually exclusive processes for VAMP8. Interacts with SBF2/MTMR13. Interacts with RAB21 (in GTP-bound form) in response to starvation; the interaction probably regulates VAMP8 endolysosomal trafficking. Interacts with STX17; this interaction is increased in the absence of TMEM39A. Interacts with TRIM6. In terms of tissue distribution, expressed (at protein level) at a high level in kidney, lung and spleen; at a lower level in testis, liver, brain and heart. Expressed in kidney and retinal pigment epithelium derived cell line.

The protein resides in the lysosome membrane. Its subcellular location is the late endosome membrane. The protein localises to the early endosome membrane. It is found in the midbody. It localises to the cell membrane. The protein resides in the zymogen granule membrane. Functionally, SNAREs, soluble N-ethylmaleimide-sensitive factor-attachment protein receptors, are essential proteins for fusion of cellular membranes. SNAREs localized on opposing membranes assemble to form a trans-SNARE complex, an extended, parallel four alpha-helical bundle that drives membrane fusion. VAMP8 is a SNARE involved in autophagy through the direct control of autophagosome membrane fusion with the lysososome membrane via its interaction with the STX17-SNAP29 binary t-SNARE complex. Also required for dense-granule secretion in platelets. Also plays a role in regulated enzyme secretion in pancreatic acinar cells. Involved in the abscission of the midbody during cell division, which leads to completely separate daughter cells. Involved in the homotypic fusion of early and late endosomes. Also participates in the activation of type I interferon antiviral response through a TRIM6-dependent mechanism. The protein is Vesicle-associated membrane protein 8 of Rattus norvegicus (Rat).